The chain runs to 1004 residues: Protein phosphatase 1 regulatory subunit 12A (1004 aa).

The interval 35 to 38 (KVKF) is important for interaction with PPP1CB. ANK repeat units lie at residues 39-68 (DDGAVFLAACSSGDTEEVLRLLERGADINY), 72-101 (DGLTALHQACIDDNVDMVKFLVENGANINQ), 105-134 (EGWIPLHAAASCGYLDIAEYLISQGAHVGA), 138-164 (EGDTPLDIAEEEAMEELLQNEVNRQGV), 198-227 (SGGTALHVAAAKGYTEVLKLLIQARYDVNI), and 231-260 (DGWTPLHAAAHWGKEEACRILVENLCDMEA). A compositionally biased stretch (basic and acidic residues) spans 291 to 300 (HSEKREKKSP). Residues 291 to 920 (HSEKREKKSP…SYLEDRKPYC (630 aa)) form a disordered region. The span at 302 to 316 (IESTANLDNNQTQKT) shows a compositional bias: polar residues. Composition is skewed to basic and acidic residues over residues 318-329 (KNKETLIMEQEK) and 336-353 (SLEHEKADEEEEGKKDES). Positions 357 to 369 (SEEEEDDDSESEA) are enriched in acidic residues. Polar residues predominate over residues 378 to 392 (ANANTTSTQSASMTA). Basic and acidic residues predominate over residues 417-427 (SPKEEERKDES). Positions 464–475 (RSASSPRLSSSL) are enriched in low complexity. The segment covering 476 to 486 (DNKEKEKDGKG) has biased composition (basic and acidic residues). The span at 514–525 (SSASSIRSGSSY) shows a compositional bias: low complexity. Residues 528–538 (RKWEEDVKKNS) show a composition bias toward basic and acidic residues. Positions 539-554 (LNEGPTSLNTSYQRSG) are enriched in polar residues. Low complexity-rich tracts occupy residues 564 to 578 (VSSNVPSTASTVTSS) and 587 to 602 (ASANTTTKSTTGSTSA). Over residues 613–624 (WAEDSTEKEKDS) the composition is skewed to basic and acidic residues. A compositionally biased stretch (low complexity) spans 625–659 (VPTAVTVPVAPSVVNAAATTTAMTTATSGTVSSTS). The span at 672–681 (VRDEESESQR) shows a compositional bias: basic and acidic residues. Over residues 682 to 692 (KARSRQARQSR) the composition is skewed to basic residues. The residue at position 695 (threonine 695) is a Phosphothreonine; by ROCK2. Residues 717–765 (RTREQENEEKEKEEKEKQDKEKQEEKKESETKDDDYRQRYSRTVEEPYH) are compositionally biased toward basic and acidic residues. Low complexity predominate over residues 770-793 (TSTSTSTSSTSSLSTSTSSLSSSS). A compositionally biased stretch (polar residues) spans 794–808 (QLNRPNSLIGITSAY). The segment covering 812 to 837 (GTKESEREGGKKEEEKEEDKSQPKSI) has biased composition (basic and acidic residues). A compositionally biased stretch (basic residues) spans 838–849 (RERRRPREKRRS). The residue at position 850 (threonine 850) is a Phosphothreonine; by ROCK2. The segment covering 864–880 (QEHQSDSEEGTNKKETQ) has biased composition (basic and acidic residues). Over residues 881–896 (SDSLSRYDTGSLSVSS) the composition is skewed to polar residues.

In terms of assembly, PP1 comprises a catalytic subunit, PPP1CA, PPP1CB or PPP1CC, and one or several targeting or regulatory subunits. PPP1R12A mediates binding to myosin. Phosphorylated by CIT (Rho-associated kinase) and by ROCK2 on serine and threonine residues. Phosphorylation at Thr-695 leads to inhibition of myosin phosphatase activity. Phosphorylation at Thr-850 abolishes myosin binding. May be phosphorylated at Thr-695 by DMPK; may inhibit the myosin phosphatase activity. Detected in brain, lung, aorta, heart, gizzard, stomach, oviduct, spleen, kidney and small intestine.

The protein localises to the cytoplasm. It is found in the cytoskeleton. It localises to the stress fiber. Its function is as follows. Regulates myosin phosphatase activity. This Gallus gallus (Chicken) protein is Protein phosphatase 1 regulatory subunit 12A (PPP1R12A).